The following is a 185-amino-acid chain: Ribosome-recycling factor (185 aa).

Belongs to the RRF family.

It is found in the cytoplasm. Responsible for the release of ribosomes from messenger RNA at the termination of protein biosynthesis. May increase the efficiency of translation by recycling ribosomes from one round of translation to another. The protein is Ribosome-recycling factor of Sulfurovum sp. (strain NBC37-1).